A 278-amino-acid polypeptide reads, in one-letter code: Sulfur carrier protein FdhD (278 aa).

Cys121 acts as the Cysteine persulfide intermediate in catalysis. A Mo-bis(molybdopterin guanine dinucleotide)-binding site is contributed by 260-265; that stretch reads FCKPGR.

Belongs to the FdhD family.

It is found in the cytoplasm. Its function is as follows. Required for formate dehydrogenase (FDH) activity. Acts as a sulfur carrier protein that transfers sulfur from IscS to the molybdenum cofactor prior to its insertion into FDH. This Salmonella paratyphi A (strain ATCC 9150 / SARB42) protein is Sulfur carrier protein FdhD.